We begin with the raw amino-acid sequence, 476 residues long: Glutamate--tRNA ligase (476 aa).

Positions 9–19 (PSPTGKLHIGT) match the 'HIGH' region motif. A compositionally biased stretch (basic and acidic residues) spans 109 to 129 (REEQKSRNKPPRYDNRHRSLS). The disordered stretch occupies residues 109 to 133 (REEQKSRNKPPRYDNRHRSLSTEEE). The 'KMSKS' region motif lies at 248 to 252 (KLSKR). Lysine 251 is a binding site for ATP.

The protein belongs to the class-I aminoacyl-tRNA synthetase family. Glutamate--tRNA ligase type 1 subfamily. In terms of assembly, monomer.

The protein localises to the cytoplasm. The enzyme catalyses tRNA(Glu) + L-glutamate + ATP = L-glutamyl-tRNA(Glu) + AMP + diphosphate. Functionally, catalyzes the attachment of glutamate to tRNA(Glu) in a two-step reaction: glutamate is first activated by ATP to form Glu-AMP and then transferred to the acceptor end of tRNA(Glu). The chain is Glutamate--tRNA ligase from Prochlorococcus marinus (strain MIT 9211).